Consider the following 268-residue polypeptide: Myb-related protein 315 (268 aa).

2 consecutive HTH myb-type domains span residues 9 to 61 (KFGL…MNYL) and 62 to 116 (RPDL…KKKL). 2 consecutive DNA-binding regions (H-T-H motif) follow at residues 37 to 61 (WRVI…MNYL) and 89 to 112 (WSKI…NTHI).

Expressed in roots, stems, leaves, seed pods and flowers. Strongest expression in the stem.

It is found in the nucleus. Transcription factor. The chain is Myb-related protein 315 from Antirrhinum majus (Garden snapdragon).